We begin with the raw amino-acid sequence, 317 residues long: Probable cell division protein WhiA (317 aa).

A DNA-binding region (H-T-H motif) is located at residues 267 to 300 (SLKELGEMLHPPVGKSGVNHRLRRLELIARQVRG).

The protein belongs to the WhiA family.

Involved in cell division and chromosome segregation. This Moorella thermoacetica (strain ATCC 39073 / JCM 9320) protein is Probable cell division protein WhiA.